The following is a 115-amino-acid chain: Large ribosomal subunit protein bL20c (115 aa).

This sequence belongs to the bacterial ribosomal protein bL20 family.

It localises to the plastid. The protein localises to the organellar chromatophore. Functionally, binds directly to 23S ribosomal RNA and is necessary for the in vitro assembly process of the 50S ribosomal subunit. It is not involved in the protein synthesizing functions of that subunit. This is Large ribosomal subunit protein bL20c from Paulinella chromatophora.